The chain runs to 261 residues: Glucosamine-6-phosphate deaminase (261 aa).

Catalysis depends on aspartate 67, which acts as the Proton acceptor; for enolization step. The active-site For ring-opening step is asparagine 135. Histidine 137 (proton acceptor; for ring-opening step) is an active-site residue. Residue glutamate 142 is the For ring-opening step of the active site.

Belongs to the glucosamine/galactosamine-6-phosphate isomerase family. NagB subfamily. In terms of assembly, homohexamer.

It catalyses the reaction alpha-D-glucosamine 6-phosphate + H2O = beta-D-fructose 6-phosphate + NH4(+). The protein operates within amino-sugar metabolism; N-acetylneuraminate degradation; D-fructose 6-phosphate from N-acetylneuraminate: step 5/5. Catalyzes the reversible isomerization-deamination of glucosamine 6-phosphate (GlcN6P) to form fructose 6-phosphate (Fru6P) and ammonium ion. The protein is Glucosamine-6-phosphate deaminase of Hahella chejuensis (strain KCTC 2396).